A 622-amino-acid polypeptide reads, in one-letter code: Serine/threonine-protein kinase MAK (622 aa).

Residues 4–284 enclose the Protein kinase domain; that stretch reads YTTMKQLGDG…ASQALKHPYF (281 aa). Residues 10-18 and lysine 33 contribute to the ATP site; that span reads LGDGTYGSV. Aspartate 125 (proton acceptor) is an active-site residue. Threonine 157 is modified (phosphothreonine; by autocatalysis). Tyrosine 159 bears the Phosphotyrosine; by autocatalysis mark. The tract at residues 301 to 371 is disordered; the sequence is QTLHKQLQPL…QGHQKPPQTM (71 aa). Residues 336–355 are compositionally biased toward polar residues; sequence QPKQGHQPLQTIQPPQNTVT.

The protein belongs to the protein kinase superfamily. CMGC Ser/Thr protein kinase family. CDC2/CDKX subfamily. Interacts with AR and CDK20. Found in a complex containing MAK, AR and NCOA3. Interacts with FZR1 (via WD repeats). Interacts with RP1. Mg(2+) is required as a cofactor. Post-translationally, autophosphorylated. Phosphorylated on serine and threonine residues. In terms of tissue distribution, in pre- and postmeiotic male germ cells in testis. In photoreceptor cells of the retina and in the olfactory receptors, and in certain epithelia of the respiratory tract and choroid plexus (brain).

Its subcellular location is the nucleus. The protein resides in the cytoplasm. It is found in the cytoskeleton. The protein localises to the microtubule organizing center. It localises to the centrosome. Its subcellular location is the spindle. The protein resides in the midbody. It is found in the cell projection. The protein localises to the cilium. It localises to the photoreceptor outer segment. Its subcellular location is the photoreceptor inner segment. The enzyme catalyses L-seryl-[protein] + ATP = O-phospho-L-seryl-[protein] + ADP + H(+). It catalyses the reaction L-threonyl-[protein] + ATP = O-phospho-L-threonyl-[protein] + ADP + H(+). In terms of biological role, essential for the regulation of ciliary length and required for the long-term survival of photoreceptors. Could have an important function in sensory cells and in spermatogenesis. May participate in signaling pathways used in visual and olfactory sensory transduction. Phosphorylates FZR1 in a cell cycle-dependent manner. Plays a role in the transcriptional coactivation of AR. This is Serine/threonine-protein kinase MAK (Mak) from Mus musculus (Mouse).